A 132-amino-acid chain; its full sequence is Small ribosomal subunit protein uS8 (132 aa).

This sequence belongs to the universal ribosomal protein uS8 family. In terms of assembly, part of the 30S ribosomal subunit. Contacts proteins S5 and S12.

In terms of biological role, one of the primary rRNA binding proteins, it binds directly to 16S rRNA central domain where it helps coordinate assembly of the platform of the 30S subunit. This Nitrobacter hamburgensis (strain DSM 10229 / NCIMB 13809 / X14) protein is Small ribosomal subunit protein uS8.